A 237-amino-acid polypeptide reads, in one-letter code: Ribosomal RNA small subunit methyltransferase G (237 aa).

Residues Gly-76, Phe-81, Val-128 to Glu-129, and Arg-147 contribute to the S-adenosyl-L-methionine site.

Belongs to the methyltransferase superfamily. RNA methyltransferase RsmG family.

It is found in the cytoplasm. Its function is as follows. Specifically methylates the N7 position of a guanine in 16S rRNA. This is Ribosomal RNA small subunit methyltransferase G from Prochlorococcus marinus (strain AS9601).